The following is a 324-amino-acid chain: Aspartate carbamoyltransferase catalytic subunit (324 aa).

Residues Arg-55 and Thr-56 each coordinate carbamoyl phosphate. Lys-83 is an L-aspartate binding site. 3 residues coordinate carbamoyl phosphate: Arg-105, His-135, and Gln-138. L-aspartate-binding residues include Arg-173 and Arg-227. Gly-268 and Pro-269 together coordinate carbamoyl phosphate.

This sequence belongs to the aspartate/ornithine carbamoyltransferase superfamily. ATCase family. As to quaternary structure, heterododecamer (2C3:3R2) of six catalytic PyrB chains organized as two trimers (C3), and six regulatory PyrI chains organized as three dimers (R2).

The catalysed reaction is carbamoyl phosphate + L-aspartate = N-carbamoyl-L-aspartate + phosphate + H(+). It participates in pyrimidine metabolism; UMP biosynthesis via de novo pathway; (S)-dihydroorotate from bicarbonate: step 2/3. In terms of biological role, catalyzes the condensation of carbamoyl phosphate and aspartate to form carbamoyl aspartate and inorganic phosphate, the committed step in the de novo pyrimidine nucleotide biosynthesis pathway. This is Aspartate carbamoyltransferase catalytic subunit from Nocardioides sp. (strain ATCC BAA-499 / JS614).